Reading from the N-terminus, the 792-residue chain is Probable phosphoketolase (792 aa).

This sequence belongs to the XFP family. It depends on thiamine diphosphate as a cofactor.

This is Probable phosphoketolase from Brucella melitensis biotype 1 (strain ATCC 23456 / CCUG 17765 / NCTC 10094 / 16M).